Consider the following 66-residue polypeptide: Large ribosomal subunit protein bL33c (66 aa).

Belongs to the bacterial ribosomal protein bL33 family.

It is found in the plastid. The protein resides in the chloroplast. This Jasminum nudiflorum (Winter jasmine) protein is Large ribosomal subunit protein bL33c.